A 131-amino-acid polypeptide reads, in one-letter code: MSWQTYVDEHLMCEIEGHHLASAAILGHDGTVWAQSADFPQFKPEEITGIMKDFDEPGHLAPTGMFVAGAKYMVIQGEPGRVIRGKKGAGGITIKKTGQALVVGIYDEPMTPGQCNMVVERLGDYLVEQGM.

A disulfide bond links Cys13 and Cys115. The short motif at 81-97 (RVIRGKKGAGGITIKKT) is the Involved in PIP2 interaction element. Position 111 is a phosphothreonine (Thr111).

The protein belongs to the profilin family. As to quaternary structure, occurs in many kinds of cells as a complex with monomeric actin in a 1:1 ratio.

It localises to the cytoplasm. The protein resides in the cytoskeleton. In terms of biological role, binds to actin and affects the structure of the cytoskeleton. At high concentrations, profilin prevents the polymerization of actin, whereas it enhances it at low concentrations. By binding to PIP2, it inhibits the formation of IP3 and DG. In Phleum pratense (Common timothy), this protein is Profilin-1 (PRO1).